Consider the following 299-residue polypeptide: Protease HtpX homolog (299 aa).

Transmembrane regions (helical) follow at residues 14 to 34 (WLLL…VGYL) and 39 to 59 (GFGG…TMIF). Residue H143 participates in Zn(2+) binding. Residue E144 is part of the active site. Residue H147 coordinates Zn(2+). The next 2 helical transmembrane spans lie at 153–173 (IRIS…AVMA) and 198–218 (IILL…ATLV). A Zn(2+)-binding site is contributed by E227.

The protein belongs to the peptidase M48B family. Zn(2+) is required as a cofactor.

It localises to the cell membrane. This chain is Protease HtpX homolog, found in Streptococcus thermophilus (strain CNRZ 1066).